We begin with the raw amino-acid sequence, 251 residues long: Hydroxyacylglutathione hydrolase (251 aa).

Residues histidine 53, histidine 55, aspartate 57, histidine 58, histidine 110, aspartate 127, and histidine 165 each coordinate Zn(2+).

This sequence belongs to the metallo-beta-lactamase superfamily. Glyoxalase II family. In terms of assembly, monomer. Zn(2+) serves as cofactor.

It catalyses the reaction an S-(2-hydroxyacyl)glutathione + H2O = a 2-hydroxy carboxylate + glutathione + H(+). It participates in secondary metabolite metabolism; methylglyoxal degradation; (R)-lactate from methylglyoxal: step 2/2. Thiolesterase that catalyzes the hydrolysis of S-D-lactoyl-glutathione to form glutathione and D-lactic acid. The polypeptide is Hydroxyacylglutathione hydrolase (Escherichia coli O6:K15:H31 (strain 536 / UPEC)).